The primary structure comprises 435 residues: Hyaluronidase-1 (435 aa).

The N-terminal stretch at 1 to 21 (MAAHLLPICTLFLNLLSVAQG) is a signal peptide. 2 disulfide bridges follow: Cys43/Cys333 and Cys207/Cys221. N-linked (GlcNAc...) asparagine glycans are attached at residues Asn70, Asn99, Asn107, and Asn121. The Proton donor role is filled by Glu131. N-linked (GlcNAc...) asparagine glycans are attached at residues Asn216, Asn256, and Asn350. Disulfide bonds link Cys358/Cys369, Cys363/Cys418, and Cys420/Cys429. The EGF-like domain maps to 418-429 (CRCYPGWRGTWC).

The protein belongs to the glycosyl hydrolase 56 family. As to expression, highly expressed in spleen, kidney, and lung.

The protein resides in the secreted. The protein localises to the lysosome. It carries out the reaction Random hydrolysis of (1-&gt;4)-linkages between N-acetyl-beta-D-glucosamine and D-glucuronate residues in hyaluronate.. May have a role in promoting tumor progression. May block the TGFB1-enhanced cell growth. This Sus scrofa (Pig) protein is Hyaluronidase-1 (HYAL1).